The sequence spans 253 residues: Ribonuclease HII (253 aa).

In terms of domain architecture, RNase H type-2 spans 70 to 253 (NLIAGIDEVG…KSFEPIKSML (184 aa)). D76, E77, and D168 together coordinate a divalent metal cation.

This sequence belongs to the RNase HII family. Mn(2+) is required as a cofactor. Mg(2+) serves as cofactor.

The protein resides in the cytoplasm. It catalyses the reaction Endonucleolytic cleavage to 5'-phosphomonoester.. Endonuclease that specifically degrades the RNA of RNA-DNA hybrids. The sequence is that of Ribonuclease HII from Streptococcus agalactiae serotype III (strain NEM316).